The following is a 513-amino-acid chain: Cytochrome P450 monooxygenase sthF (513 aa).

Transmembrane regions (helical) follow at residues 13–33 (FPSLHRIIISTFALIAAYIFI) and 212–232 (MLHPWLQLVFANIYITHIILL). Cysteine 452 provides a ligand contact to heme.

Belongs to the cytochrome P450 family. It depends on heme as a cofactor.

The protein localises to the membrane. The enzyme catalyses dehydroprobetaenone I + NADPH + O2 + H(+) = epoxybetaenone + NADP(+) + H2O. It catalyses the reaction dehydroprobetaenone I + 3 NADPH + 3 O2 + 3 H(+) = betaenone C + 3 NADP(+) + 3 H2O. It carries out the reaction probetaenone I + 3 NADPH + 3 O2 + 3 H(+) = betaenone B + 3 NADP(+) + 3 H2O. The protein operates within mycotoxin biosynthesis. Functionally, cytochrome P450 monooxygenase; part of the gene cluster that mediates the biosynthesis of the phytotoxin stemphyloxin II. The first step of the pathway is the synthesis of dehydroprobetaenone I by the polyketide synthase sthA and the enoyl reductase sthE via condensation of one acetyl-CoA starter unit with 7 malonyl-CoA units and 5 methylations. The C-terminal reductase (R) domain of sthA catalyzes the reductive release of the polyketide chain. Because sthA lacks a designated enoylreductase (ER) domain, the required activity is provided the enoyl reductase sthE. The short-chain dehydrogenase/reductase sthC then catalyzes reduction of dehydroprobetaenone I to probetaenone I. The cytochrome P450 monooxygenase sthF catalyzes successive epoxidation, oxidation (resulting from epoxide opening) and hydroxylation to install a tertiary alcohol in the decaline ring to yield betaenone C from dehydroprobetaenone I and betaenone B from probetaenone I. The FAD-linked oxidoreductase sthB is responsible for the conversion of betaenone C to betaenone A via an intramolecular aldol reaction between C-1 and C-17 to form the bridged tricyclic system in betaenone A. Finally, the cytochrome P450 monooxygenase sthD catalyzes the hydroxylation of C-15 to afford the final metabolite stemphyloxin II. This Phaeosphaeria nodorum (strain SN15 / ATCC MYA-4574 / FGSC 10173) (Glume blotch fungus) protein is Cytochrome P450 monooxygenase sthF.